Consider the following 152-residue polypeptide: B3 domain-containing protein At1g10455 (152 aa).

Residues 24–131 (LKKKLSDSDL…EVKFKHFKSQ (108 aa)) constitute a DNA-binding region (TF-B3).

The protein localises to the nucleus. This chain is B3 domain-containing protein At1g10455, found in Arabidopsis thaliana (Mouse-ear cress).